The chain runs to 53 residues: Ribulose bisphosphate carboxylase large chain (53 aa).

Residues 1–2 (MS) constitute a propeptide that is removed on maturation. At P3 the chain carries N-acetylproline. K14 is modified (N6,N6,N6-trimethyllysine).

The protein belongs to the RuBisCO large chain family. Type I subfamily. As to quaternary structure, heterohexadecamer of 8 large chains and 8 small chains.

The protein localises to the plastid. It is found in the chloroplast. The enzyme catalyses 2 (2R)-3-phosphoglycerate + 2 H(+) = D-ribulose 1,5-bisphosphate + CO2 + H2O. It catalyses the reaction D-ribulose 1,5-bisphosphate + O2 = 2-phosphoglycolate + (2R)-3-phosphoglycerate + 2 H(+). RuBisCO catalyzes two reactions: the carboxylation of D-ribulose 1,5-bisphosphate, the primary event in carbon dioxide fixation, as well as the oxidative fragmentation of the pentose substrate in the photorespiration process. Both reactions occur simultaneously and in competition at the same active site. The polypeptide is Ribulose bisphosphate carboxylase large chain (rbcL) (Malus domestica (Apple)).